Reading from the N-terminus, the 690-residue chain is Probable xyloglucan glycosyltransferase 1 (690 aa).

A run of 2 helical transmembrane segments spans residues 120–140 (AFLL…AQGW) and 166–186 (LEYL…LFLI). D272 is a catalytic residue. Substrate is bound by residues D331 and D333. Residue D425 is part of the active site. Transmembrane regions (helical) follow at residues 503-523 (LILP…TMFV) and 528-548 (LPAW…ILPA). A disordered region spans residues 607–637 (QPKQQRVGSAPNLDSLAKESHPKKDSKKKKH). 2 consecutive transmembrane segments (helical) span residues 640–659 (IYQK…ARSL) and 665–685 (IHFY…LDLI).

Belongs to the glycosyltransferase 2 family. Plant cellulose synthase-like C subfamily.

It localises to the golgi apparatus membrane. In terms of biological role, probable beta-1,4-glucan synthase rather involved in the synthesis of the xyloglucan backbone than cellulose. Seems to work simultaneously with xyloglucan 6-xylosyltransferase. Xyloglucan is a noncellulosic polysaccharides of plant cell wall and consists of a glucan backbone substituted by xylose, galactose and fucose. This chain is Probable xyloglucan glycosyltransferase 1 (CSLC1), found in Oryza sativa subsp. japonica (Rice).